A 75-amino-acid polypeptide reads, in one-letter code: UPF0346 protein LEUM_0763 (75 aa).

It belongs to the UPF0346 family.

This is UPF0346 protein LEUM_0763 from Leuconostoc mesenteroides subsp. mesenteroides (strain ATCC 8293 / DSM 20343 / BCRC 11652 / CCM 1803 / JCM 6124 / NCDO 523 / NBRC 100496 / NCIMB 8023 / NCTC 12954 / NRRL B-1118 / 37Y).